We begin with the raw amino-acid sequence, 420 residues long: Dynein axonemal assembly factor 4 (420 aa).

The CS domain maps to Val3–Ser87. The mediates interaction with ESR1 and STUB1 stretch occupies residues Glu7–Ser103. Residues Cys165 to Ala192 show a composition bias toward basic and acidic residues. Residues Cys165–Arg212 form a disordered region. TPR repeat units follow at residues Pro288 to Ile321, Val323 to Pro355, and Met364 to Asn397.

As to quaternary structure, interacts with ZMYND10. Interacts with STUB1. Interacts with ESR1 and ESR2. Interacts with DNAAF2. Interacts with CCT3, CCT4, CCT5 and CCT8. Interacts with DNAAF6/PIH1D3.

It is found in the nucleus. Its subcellular location is the cytoplasm. The protein localises to the cell projection. It localises to the neuron projection. The protein resides in the dynein axonemal particle. Its function is as follows. Involved in neuronal migration during development of the cerebral neocortex. May regulate the stability and proteasomal degradation of the estrogen receptors that play an important role in neuronal differentiation, survival and plasticity. Axonemal dynein assembly factor required for ciliary motility. In Rattus norvegicus (Rat), this protein is Dynein axonemal assembly factor 4.